A 219-amino-acid chain; its full sequence is 2-hydroxy-3-keto-5-methylthiopentenyl-1-phosphate phosphatase (219 aa).

Belongs to the HAD-like hydrolase superfamily. MtnX family.

It carries out the reaction 2-hydroxy-5-methylsulfanyl-3-oxopent-1-enyl phosphate + H2O = 1,2-dihydroxy-5-(methylsulfanyl)pent-1-en-3-one + phosphate. It functions in the pathway amino-acid biosynthesis; L-methionine biosynthesis via salvage pathway; L-methionine from S-methyl-5-thio-alpha-D-ribose 1-phosphate: step 4/6. In terms of biological role, dephosphorylates 2-hydroxy-3-keto-5-methylthiopentenyl-1-phosphate (HK-MTPenyl-1-P) yielding 1,2-dihydroxy-3-keto-5-methylthiopentene (DHK-MTPene). The protein is 2-hydroxy-3-keto-5-methylthiopentenyl-1-phosphate phosphatase of Bacillus anthracis (strain A0248).